We begin with the raw amino-acid sequence, 101 residues long: Small ribosomal subunit protein bS6 (101 aa).

It belongs to the bacterial ribosomal protein bS6 family.

In terms of biological role, binds together with bS18 to 16S ribosomal RNA. This is Small ribosomal subunit protein bS6 from Staphylococcus saprophyticus subsp. saprophyticus (strain ATCC 15305 / DSM 20229 / NCIMB 8711 / NCTC 7292 / S-41).